The primary structure comprises 401 residues: Calreticulin (401 aa).

A signal peptide spans 1-18 (MRKELWLGLLLSSQAVLS). Cys-103 and Cys-134 are oxidised to a cystine. An alpha-D-glucoside is bound by residues Tyr-107, Lys-109, Tyr-125, and Asp-132. 7 tandem repeats follow at residues 187-198 (KESGTLEEDWEI), 206-217 (DPEDKKPADWVD), 223-234 (DPEDKKPEDWDK), 241-252 (DPDATQPDDWDE), 256-266 (GKWEAPMISNP), 270-280 (GEWKAKKIPNP), and 284-294 (GVWKPRDIPNP). The 4 X approximate repeats stretch occupies residues 187–252 (KESGTLEEDW…DATQPDDWDE (66 aa)). 2 stretches are compositionally biased toward basic and acidic residues: residues 199 to 214 (LKPK…KPAD) and 224 to 236 (PEDK…DKEP). Residues 199 to 263 (LKPKTIPDPE…EDGKWEAPMI (65 aa)) form a disordered region. The span at 246 to 256 (QPDDWDEEEDG) shows a compositional bias: acidic residues. The 3 X approximate repeats stretch occupies residues 256 to 294 (GKWEAPMISNPKYKGEWKAKKIPNPAYKGVWKPRDIPNP). Asp-314 contacts an alpha-D-glucoside. A disordered region spans residues 341–401 (DQTNGATKDA…EEEDDKKDEL (61 aa)). Residues 348–381 (KDAEKKAFDSAEADKRKKEEDERKKQEEEEKKTA) show a composition bias toward basic and acidic residues. The span at 382–401 (EEDEDDDDEEEEEDDKKDEL) shows a compositional bias: acidic residues. Positions 398 to 401 (KDEL) match the Prevents secretion from ER motif.

Belongs to the calreticulin family.

It is found in the endoplasmic reticulum lumen. In terms of biological role, molecular calcium-binding chaperone promoting folding, oligomeric assembly and quality control in the ER via the calreticulin/calnexin cycle. This lectin may interact transiently with almost all of the monoglucosylated glycoproteins that are synthesized in the ER. This Euglena gracilis protein is Calreticulin.